A 467-amino-acid polypeptide reads, in one-letter code: MSSILPFTPPVVKRLLGWKKSAGGSGGAGGGEQNGQEEKWCEKAVKSLVKKLKKTGRLDELEKAITTQNCNTKCVTIPSTCSEIWGLSTANTVDQWDTTGLYSFSEQTRSLDGRLQVSHRKGLPHVIYCRLWRWPDLHSHHELKAIENCEYAFSLKKDEVCVNPYHYQRVETPVLPPVLVPRHTEILTELPPLDDYTHSIPENTNFPAGIEPQSNYIPETPPPGYISEDGETSDQQLNQSMDTGSPAELSPTTLSPVNHSLDLQPVTYSEPAFWCSIAYYELNQRVGETFHASQPSLTVDGFTDPSNSERFCLGLLSNVNRNATVEMTRRHIGRGVRLYYIGGEVFAECLSDSAIFVQSPNCNQRYGWHPATVCKIPPGCNLKIFNNQEFAALLAQSVNQGFEAVYQLTRMCTIRMSFVKGWGAEYRRQTVTSTPCWIELHLNGPLQWLDKVLTQMGSPSVRCSSMS.

An N-acetylserine modification is found at Ser-2. Residue Thr-8 is modified to Phosphothreonine. One can recognise an MH1 domain in the interval 10-176 (PVVKRLLGWK…YQRVETPVLP (167 aa)). Lys-19 carries the N6-acetyllysine modification. Cys-74, Cys-149, Cys-161, and His-166 together coordinate Zn(2+). The span at 207–217 (PAGIEPQSNYI) shows a compositional bias: polar residues. The interval 207–251 (PAGIEPQSNYIPETPPPGYISEDGETSDQQLNQSMDTGSPAELSP) is disordered. Phosphothreonine is present on Thr-220. The short motif at 221-225 (PPPGY) is the PY-motif element. Polar residues predominate over residues 233–243 (SDQQLNQSMDT). Position 240 is a phosphoserine; by CAMK2 (Ser-240). A phosphoserine mark is found at Ser-245, Ser-250, Ser-255, Ser-458, Ser-460, and Ser-464. Residues 274 to 467 (WCSIAYYELN…SPSVRCSSMS (194 aa)) enclose the MH2 domain. Ser-465 and Ser-467 each carry phosphoserine; by TGFBR1.

It belongs to the dwarfin/SMAD family. As to quaternary structure, monomer; in the absence of TGF-beta. Heterodimer; in the presence of TGF-beta. Forms a heterodimer with co-SMAD, SMAD4, in the nucleus to form the transactivation complex SMAD2/SMAD4. Found in a complex with SMAD3 and TRIM33 upon addition of TGF-beta. Identified in a complex that contains at least ZNF451, SMAD2, SMAD3 and SMAD4. Interacts (via the MH2 domain) with ZFYVE9; may form trimers with the SMAD4 co-SMAD. Interacts with TAZ/WWRT1. Interacts with FOXH1. Interacts with SNW1. Interacts with CREB-binding protein (CBP) and EP300. Interacts with SNON. Interacts with ALK4/ACVR1B. Interacts with SKOR1. Interacts with SKOR2. Interacts with PRDM16. Interacts (via MH2 domain) with LEMD3. Interacts with RBPMS. Interacts with WWP1. Interacts (dephosphorylated form, via the MH1 and MH2 domains) with RANBP3 (via its C-terminal R domain); the interaction results in the export of dephosphorylated SMAD3 out of the nucleus and termination of the TGF-beta signaling. Interacts with PDPK1 (via PH domain). Interacts with DAB2; the interactions are enhanced upon TGF-beta stimulation. Interacts with USP15. Interacts with PPP5C. Interacts with LDLRAD4 (via the SMAD interaction motif). Interacts (via MH2 domain) with PMEPA1 (via the SMAD interaction motif). Interacts with ZFHX3. Interacts with ZNF451. Interacts with SMURF2 when phosphorylated on Ser-465/467. Interacts with PPM1A. Interacts with TGF-beta. Interacts with TGFBR1. Interacts with TGIF. Interacts with SMAD3 and TRIM33. Interacts with ZNF580. Interacts with NEDD4L in response to TGF-beta. Interacts with HGS. Interacts with AIP1. Interacts with WWP1. Interacts with PML. Interacts weakly with ZNF8. Interacts (when phosphorylated) with RNF111; RNF111 acts as an enhancer of the transcriptional responses by mediating ubiquitination and degradation of SMAD2 inhibitors. Interacts with YAP1 (when phosphorylated at 'Ser-112'). Interacts when phosphorylated with IPO7; the interaction facilitates translocation of SMAD2 to the nucleus. Interacts with MTMR4; negatively regulates TGF-beta signaling through SMAD2 dephosphorylation and retention in endosomes. In terms of processing, in response to TGF-beta, phosphorylated on the C-terminal SXS motif by TGF-beta and activin type 1 receptor kinases, phosphorylation declines progressively in a KMT5A-dependent manner. Phosphorylation in this motif is required for interaction with a number of proteins including SMURF2, SNON and SMAD4 in response to TGF-beta. Dephosphorylated in this motif by PPM1A leading to disruption of the SMAD2/3-SMAD4 complex, nuclear export and termination of the TGF-beta signaling. In response to decorin, the naturally occurring inhibitor of TGF-beta signaling, phosphorylated on Ser-240 by CaMK2. Phosphorylated by MAPK3 upon EGF stimulation; which increases transcriptional activity and stability, and is blocked by calmodulin. Phosphorylated by PDPK1. Post-translationally, acetylated on Lys-19 by coactivators in response to TGF-beta signaling, which increases transcriptional activity. In response to TGF-beta, ubiquitinated by NEDD4L; which promotes its degradation. Monoubiquitinated, leading to prevent DNA-binding. Deubiquitination by USP15 alleviates inhibition and promotes activation of TGF-beta target genes. Ubiquitinated by RNF111, leading to its degradation: only SMAD2 proteins that are 'in use' are targeted by RNF111, RNF111 playing a key role in activating SMAD2 and regulating its turnover. As to expression, expressed in cardiomyocytes.

The protein resides in the cytoplasm. Its subcellular location is the nucleus. Functionally, receptor-regulated SMAD (R-SMAD) that is an intracellular signal transducer and transcriptional modulator activated by TGF-beta (transforming growth factor) and activin type 1 receptor kinases. Binds the TRE element in the promoter region of many genes that are regulated by TGF-beta and, on formation of the SMAD2/SMAD4 complex, activates transcription. Promotes TGFB1-mediated transcription of odontoblastic differentiation genes in dental papilla cells. Positively regulates PDPK1 kinase activity by stimulating its dissociation from the 14-3-3 protein YWHAQ which acts as a negative regulator. This Rattus norvegicus (Rat) protein is Mothers against decapentaplegic homolog 2 (Smad2).